A 60-amino-acid polypeptide reads, in one-letter code: Mannitol-specific phosphotransferase enzyme IIA component (60 aa).

The PTS EIIA type-2 domain maps to 2 to 60 (SELFSNDNIFLNVNVNSQNEAIEKAGKALVDSGAVTDAYIQVVSTFMGNGLAIPHGTDD). His-56 serves as the catalytic Tele-phosphohistidine intermediate. His-56 is modified (phosphohistidine; by HPr).

Homodimer or homotrimer. Seems to be a monomer when not phosphorylated.

It is found in the cytoplasm. Functionally, the phosphoenolpyruvate-dependent sugar phosphotransferase system (sugar PTS), a major carbohydrate active transport system, catalyzes the phosphorylation of incoming sugar substrates concomitantly with their translocation across the cell membrane. The enzyme II CmtAB PTS system is involved in D-mannitol transport. The sequence is that of Mannitol-specific phosphotransferase enzyme IIA component from Staphylococcus aureus.